Consider the following 265-residue polypeptide: Homeobox protein engrailed-2-B (265 aa).

Basic and acidic residues-rich tracts occupy residues 1-12 (MEENEQNNREVE) and 102-115 (GEKK…ETLK). Disordered stretches follow at residues 1 to 38 (MEEN…QPHH), 60 to 138 (INHQ…SSKA), and 156 to 182 (DRPS…PRTA). Positions 122–136 (DHSLSSDSDSSQASS) are enriched in low complexity. A DNA-binding region (homeobox) is located at residues 176-235 (DKRPRTAFTAEQLQRLKAEFQTNRYLTEQRRQSLAQELGLNESQIKIWFQNKRAKIKKST).

It belongs to the engrailed homeobox family.

The protein resides in the nucleus. In Xenopus laevis (African clawed frog), this protein is Homeobox protein engrailed-2-B (en2-b).